The primary structure comprises 167 residues: U-scoloptoxin(08)-Er5a (167 aa).

The signal sequence occupies residues 1 to 22 (MKTNCEFPLLCLLIVLVANVEG). Positions 23–94 (EVEDTGLKMV…KRLWRNWERR (72 aa)) are excised as a propeptide. RLWRNWE repeat units lie at residues 34–40 (RLWRNWE), 61–67 (RLWRNWE), and 86–92 (RLWRNWE). Gln95 bears the Pyrrolidone carboxylic acid mark. The RLWRNWE 4; approximate repeat unit spans residues 107-113 (ELWRNWE). A propeptide spanning residues 112–118 (WEDLKRR) is cleaved from the precursor. Residue Gln119 is modified to Pyrrolidone carboxylic acid. One copy of the RLWRNWE 5 repeat lies at 134–140 (RLWRNWE). The propeptide occupies 139–167 (WEDNHATLRKRSADSLSRQKRLGKERGKE). The disordered stretch occupies residues 147 to 167 (RKRSADSLSRQKRLGKERGKE).

It belongs to the scoloptoxin-08 family. As to expression, expressed by the venom gland.

The protein resides in the secreted. The protein is U-scoloptoxin(08)-Er5a of Ethmostigmus rubripes (Giant centipede).